We begin with the raw amino-acid sequence, 186 residues long: GMP synthase [glutamine-hydrolyzing] subunit A (186 aa).

A Glutamine amidotransferase type-1 domain is found at 3–186; it reads MILIINNHGQ…FENFYDVCRS (184 aa). The active-site Nucleophile is Cys-77. Residues His-164 and Glu-166 contribute to the active site.

Heterodimer composed of a glutamine amidotransferase subunit (A) and a GMP-binding subunit (B).

It carries out the reaction XMP + L-glutamine + ATP + H2O = GMP + L-glutamate + AMP + diphosphate + 2 H(+). It functions in the pathway purine metabolism; GMP biosynthesis; GMP from XMP (L-Gln route): step 1/1. Its function is as follows. Catalyzes the synthesis of GMP from XMP. This chain is GMP synthase [glutamine-hydrolyzing] subunit A, found in Methanothermobacter thermautotrophicus (strain ATCC 29096 / DSM 1053 / JCM 10044 / NBRC 100330 / Delta H) (Methanobacterium thermoautotrophicum).